The chain runs to 473 residues: Adhesive plaque matrix protein 2 (473 aa).

The N-terminal stretch at 1–17 (MLFSFFLLLTCTQLCLG) is a signal peptide. Residues Y23, Y31, Y36, and Y43 each carry the 3',4'-dihydroxyphenylalanine modification. EGF-like domains are found at residues 45–81 (PVNP…YNCN), 82–117 (LKNA…GRLC), 118–154 (EKNV…GPRC), 155–191 (EVHA…GPTC), 192–228 (QENA…GPEC), 229–265 (ERYV…GPTC), 266–301 (KVNV…GPTC), 302–340 (GENV…PTCE), 342–378 (KPNP…RHCT), 383–420 (KPNP…RHCT), and 425–461 (KKNP…RYCS). 33 cysteine pairs are disulfide-bonded: C49–C60, C54–C69, C71–C80, C86–C97, C91–C106, C108–C117, C122–C133, C127–C143, C145–C154, C159–C170, C164–C180, C182–C191, C196–C207, C201–C217, C219–C228, C233–C244, C238–C254, C256–C265, C270–C281, C275–C290, C292–C301, C306–C317, C311–C328, C330–C339, C346–C357, C351–C366, C368–C377, C387–C399, C393–C408, C410–C419, C429–C440, C434–C449, and C451–C460. N-linked (GlcNAc...) asparagine glycosylation is present at N93.

In terms of processing, contains L-DOPA (3',4'-dihydroxyphenylalanine). As to expression, produced by the byssal gland.

The protein localises to the secreted. Functionally, provides adhesiveness to the mussel's foot. Mussels produce one of the strongest water insoluble glues. The mussel's adhesive is a bundle of threads, called a byssus, formed by a fibrous collagenous core coated with adhesive proteins. The sequence is that of Adhesive plaque matrix protein 2 (FP2) from Mytilus galloprovincialis (Mediterranean mussel).